A 393-amino-acid polypeptide reads, in one-letter code: Phospholipid-transporting ATPase accessory subunit CRF1 (393 aa).

At 1-46 the chain is on the cytoplasmic side; the sequence is MGLILRWKEKKQLSSKQNAQKSRKPANTSFRQQRLKAWQPILSPQS. A helical membrane pass occupies residues 47 to 67; sequence VLPLLILMACVFAPIGIGLVV. At 68-334 the chain is on the lumenal side; it reads STISVQRLVV…NSIIGAGNEA (267 aa). The confers specificity for binding DNF3 stretch occupies residues 70 to 332; that stretch reads ISVQRLVVNY…TTNSIIGAGN (263 aa). 7 N-linked (GlcNAc...) asparagine glycosylation sites follow: asparagine 78, asparagine 123, asparagine 187, asparagine 202, asparagine 213, asparagine 240, and asparagine 291. 2 cysteine pairs are disulfide-bonded: cysteine 82–cysteine 126 and cysteine 179–cysteine 193. Residues 335–355 traverse the membrane as a helical segment; it reads LGIVYLIVAGIATLFAILFLI. Residues 356–393 lie on the Cytoplasmic side of the membrane; it reads KVIFKPRPMHDHSYLNFENSDTPFDESSVVSIPLREIL.

It belongs to the CDC50/LEM3 family. In terms of assembly, component of a flippase complex consisting of DNF3 and YNR048W/CRF1. Interacts with DNF3; the interaction is direct and required for proper expression and endoplasmic reticulum (ER) export of either partner.

The protein localises to the golgi apparatus. Its subcellular location is the trans-Golgi network membrane. In terms of biological role, accessory component of a P4-ATPase flippase complex which catalyzes the hydrolysis of ATP coupled to the transport of phosphatidylcholine and small amounts of phosphatidylethanolamine from the lumen to the cytosolic leaflet of the trans-Golgi network and ensures the maintenance of asymmetric distribution of phospholipids. May be involved in transport from early endosomes to the trans-Golgi network (TGN). The protein is Phospholipid-transporting ATPase accessory subunit CRF1 of Saccharomyces cerevisiae (strain ATCC 204508 / S288c) (Baker's yeast).